Consider the following 445-residue polypeptide: MATAASNHYSLLTSSASIVHAEPPGGMQQGAGGYREAQSLQVQGDYGALQSNGHPLSHAHWITALSHGGSGGGGGGGGGGGGGGGGGGDGSPWSTSPLGQPDIKPSVVVQQGGRGDELHGPGALQQQHQQQQQQQQQQQQQQQQQQQQQQQRPPHLVHHAANNHPGPGAWRSAAAAAHLPPSMGASNGGLLYSQPSFTVNGMLGAGGQPAGLHHHGLRDAHDEPHHADHHPHPHSHPHQQPPPPPPPQGPPGHPGAHHDPHSDEDTPTSDDLEQFAKQFKQRRIKLGFTQADVGLALGTLYGNVFSQTTICRFEALQLSFKNMCKLKPLLNKWLEEADSSSGSPTSIDKIASQGRKRKKRTSIEVSVKGALESHFLKCPKPSAQEITSLADSLQLEKEVVRVWFCNRRQKEKRMTPPGGTLPGAEDVYGGSRDTPPHHGVQTPVQ.

Disordered regions lie at residues 63 to 173 (TALS…WRSA), 203 to 269 (LGAG…TPTS), 336 to 361 (EADSSSGSPTSIDKIASQGRKRKKRT), and 411 to 445 (EKRMTPPGGTLPGAEDVYGGSRDTPPHHGVQTPVQ). Positions 68-90 (GGSGGGGGGGGGGGGGGGGGGDG) are enriched in gly residues. The segment covering 125-151 (QQQHQQQQQQQQQQQQQQQQQQQQQQQ) has biased composition (low complexity). The segment covering 217 to 226 (LRDAHDEPHH) has biased composition (basic and acidic residues). A compositionally biased stretch (basic residues) spans 227-237 (ADHHPHPHSHP). Residues 239–253 (QQPPPPPPPQGPPGH) show a composition bias toward pro residues. One can recognise a POU-specific domain in the interval 264–338 (EDTPTSDDLE…LLNKWLEEAD (75 aa)). Position 343 is a phosphoserine (Ser343). The segment at residues 356–415 (KRKKRTSIEVSVKGALESHFLKCPKPSAQEITSLADSLQLEKEVVRVWFCNRRQKEKRMT) is a DNA-binding region (homeobox).

It belongs to the POU transcription factor family. Class-3 subfamily. In terms of assembly, interacts with PQBP1. Interaction with ISL1. As to expression, expressed specifically at high levels in the brain.

The protein localises to the nucleus. Its function is as follows. Transcription factor that plays a key role in neuronal differentiation. Binds preferentially to the recognition sequence which consists of two distinct half-sites, ('GCAT') and ('TAAT'), separated by a non-conserved spacer region of 0, 2, or 3 nucleotides. Acts as a transcriptional activator when binding cooperatively with SOX4, SOX11, or SOX12 to gene promoters. The combination of three transcription factors, ASCL1, POU3F2/BRN2 and MYT1L, is sufficient to reprogram fibroblasts and other somatic cells into induced neuronal (iN) cells in vitro. Acts downstream of ASCL1, accessing chromatin that has been opened by ASCL1, and promotes transcription of neuronal genes. This Rattus norvegicus (Rat) protein is POU domain, class 3, transcription factor 2 (Pou3f2).